Consider the following 556-residue polypeptide: 2-succinyl-5-enolpyruvyl-6-hydroxy-3-cyclohexene-1-carboxylate synthase (556 aa).

The protein belongs to the TPP enzyme family. MenD subfamily. As to quaternary structure, homodimer. Mg(2+) is required as a cofactor. Requires Mn(2+) as cofactor. It depends on thiamine diphosphate as a cofactor.

It catalyses the reaction isochorismate + 2-oxoglutarate + H(+) = 5-enolpyruvoyl-6-hydroxy-2-succinyl-cyclohex-3-ene-1-carboxylate + CO2. It participates in quinol/quinone metabolism; 1,4-dihydroxy-2-naphthoate biosynthesis; 1,4-dihydroxy-2-naphthoate from chorismate: step 2/7. Its pathway is quinol/quinone metabolism; menaquinone biosynthesis. Functionally, catalyzes the thiamine diphosphate-dependent decarboxylation of 2-oxoglutarate and the subsequent addition of the resulting succinic semialdehyde-thiamine pyrophosphate anion to isochorismate to yield 2-succinyl-5-enolpyruvyl-6-hydroxy-3-cyclohexene-1-carboxylate (SEPHCHC). This is 2-succinyl-5-enolpyruvyl-6-hydroxy-3-cyclohexene-1-carboxylate synthase from Salmonella heidelberg (strain SL476).